The chain runs to 420 residues: Histidine--tRNA ligase (420 aa).

The protein belongs to the class-II aminoacyl-tRNA synthetase family. Homodimer.

The protein resides in the cytoplasm. The catalysed reaction is tRNA(His) + L-histidine + ATP = L-histidyl-tRNA(His) + AMP + diphosphate + H(+). This chain is Histidine--tRNA ligase, found in Staphylococcus saprophyticus subsp. saprophyticus (strain ATCC 15305 / DSM 20229 / NCIMB 8711 / NCTC 7292 / S-41).